The following is a 595-amino-acid chain: Parathyroid hormone/parathyroid hormone-related peptide receptor (595 aa).

Residues 1–28 (MGAVRIAPGLALLLCCPVLSSAYALVDA) form the signal peptide. At 29–188 (DDVMTKEEQI…REREVFDRLG (160 aa)) the chain is on the extracellular side. 3 disulfides stabilise this stretch: Cys48–Cys117, Cys108–Cys148, and Cys131–Cys170. The interval 66-103 (DKGWASASTSGKPKKEKASGKLYPESEEDKEVPTGSRH) is disordered. N-linked (GlcNAc...) asparagine glycans are attached at residues Asn151, Asn161, Asn166, and Asn176. A helical transmembrane segment spans residues 189–209 (MIYTVGYSVSLASLTVAVLIL). Residues 210–223 (AYFRRLHCTRNYIH) lie on the Cytoplasmic side of the membrane. The helical transmembrane segment at 224 to 244 (MHLFLSFMLRAVSIFVKDAVL) threads the bilayer. Over 245 to 294 (YSGATLDEAERLTEEELRAIAQAPPPPTAAAGYAGCRVAVTFFLYFLATN) the chain is Extracellular. Residues 295–315 (YYWILVEGLYLHSLIFMAFFS) traverse the membrane as a helical segment. The Cytoplasmic portion of the chain corresponds to 316–318 (EKK). A helical transmembrane segment spans residues 319–339 (YLWGFTVFGWGLPAVFVAVWV). Over 340–360 (SVRATLANTGCWDLSSGNKKW) the chain is Extracellular. The chain crosses the membrane as a helical span at residues 361-381 (IIQVPILASIVLNFILFINIV). Residues 382-404 (RVLATKLRETNAGRCDTRQQYRK) are Cytoplasmic-facing. The chain crosses the membrane as a helical span at residues 405-425 (LLKSTLVLMPLFGVHYIVFMA). Topologically, residues 426–439 (TPYTEVSGTLWQVQ) are extracellular. The chain crosses the membrane as a helical span at residues 440–460 (MHYEMLFNSFQGFFVAIIYCF). Topologically, residues 461–595 (CNGEVQAEIK…LLQEEWETVM (135 aa)) are cytoplasmic. Positions 473–476 (WSRW) match the Important for interaction with G proteins motif. Residues 528 to 595 (TTTATTNGHP…LLQEEWETVM (68 aa)) form a disordered region. Positions 547 to 559 (APTLPATPPATAA) are enriched in low complexity. The residue at position 553 (Thr553) is a Phosphothreonine.

The protein belongs to the G-protein coupled receptor 2 family. As to quaternary structure, homodimer in the absence of bound ligand. Peptide hormone binding leads to dissociation of the homodimer. Post-translationally, N-glycosylated. As to expression, high levels in the kidney, with much lower levels in aorta, heart, lung, prostate, testis, and skeletal muscle.

Its subcellular location is the cell membrane. Functionally, G-protein-coupled receptor for parathyroid hormone (PTH) and for parathyroid hormone-related peptide (PTHLH). Ligand binding causes a conformation change that triggers signaling via guanine nucleotide-binding proteins (G proteins) and modulates the activity of downstream effectors, such as adenylate cyclase (cAMP). PTH1R is coupled to G(s) G alpha proteins and mediates activation of adenylate cyclase activity. PTHLH dissociates from PTH1R more rapidly than PTH; as consequence, the cAMP response induced by PTHLH decays faster than the response induced by PTH. This Canis lupus familiaris (Dog) protein is Parathyroid hormone/parathyroid hormone-related peptide receptor (PTH1R).